The sequence spans 91 residues: Probable Fe(2+)-trafficking protein (91 aa).

This sequence belongs to the Fe(2+)-trafficking protein family.

Its function is as follows. Could be a mediator in iron transactions between iron acquisition and iron-requiring processes, such as synthesis and/or repair of Fe-S clusters in biosynthetic enzymes. This chain is Probable Fe(2+)-trafficking protein, found in Shewanella amazonensis (strain ATCC BAA-1098 / SB2B).